The primary structure comprises 339 residues: Anthranilate phosphoribosyltransferase (339 aa).

5-phospho-alpha-D-ribose 1-diphosphate-binding positions include glycine 79, 82-83, threonine 87, 89-92, 107-115, and serine 119; these read GD, NVST, and KHGNRSVSS. Glycine 79 serves as a coordination point for anthranilate. Serine 91 contributes to the Mg(2+) binding site. Asparagine 110 is a binding site for anthranilate. An anthranilate-binding site is contributed by arginine 165. Residues aspartate 224 and glutamate 225 each contribute to the Mg(2+) site.

Belongs to the anthranilate phosphoribosyltransferase family. Homodimer. Mg(2+) serves as cofactor.

The catalysed reaction is N-(5-phospho-beta-D-ribosyl)anthranilate + diphosphate = 5-phospho-alpha-D-ribose 1-diphosphate + anthranilate. It functions in the pathway amino-acid biosynthesis; L-tryptophan biosynthesis; L-tryptophan from chorismate: step 2/5. In terms of biological role, catalyzes the transfer of the phosphoribosyl group of 5-phosphorylribose-1-pyrophosphate (PRPP) to anthranilate to yield N-(5'-phosphoribosyl)-anthranilate (PRA). The protein is Anthranilate phosphoribosyltransferase of Caldivirga maquilingensis (strain ATCC 700844 / DSM 13496 / JCM 10307 / IC-167).